Consider the following 427-residue polypeptide: Peptidase B (427 aa).

2 residues coordinate Mn(2+): Lys195 and Asp200. The active site involves Lys207. Mn(2+) is bound by residues Asp218, Asp277, and Glu279. Arg281 is an active-site residue.

This sequence belongs to the peptidase M17 family. As to quaternary structure, homohexamer. The cofactor is Mn(2+).

It localises to the cytoplasm. The enzyme catalyses Release of an N-terminal amino acid, Xaa, from a peptide or arylamide. Xaa is preferably Glu or Asp but may be other amino acids, including Leu, Met, His, Cys and Gln.. In terms of biological role, probably plays an important role in intracellular peptide degradation. In Escherichia fergusonii (strain ATCC 35469 / DSM 13698 / CCUG 18766 / IAM 14443 / JCM 21226 / LMG 7866 / NBRC 102419 / NCTC 12128 / CDC 0568-73), this protein is Peptidase B.